The following is a 166-amino-acid chain: Large ribosomal subunit protein uL10 (166 aa).

Belongs to the universal ribosomal protein uL10 family. Part of the ribosomal stalk of the 50S ribosomal subunit. The N-terminus interacts with L11 and the large rRNA to form the base of the stalk. The C-terminus forms an elongated spine to which L12 dimers bind in a sequential fashion forming a multimeric L10(L12)X complex.

In terms of biological role, forms part of the ribosomal stalk, playing a central role in the interaction of the ribosome with GTP-bound translation factors. The sequence is that of Large ribosomal subunit protein uL10 from Alkaliphilus metalliredigens (strain QYMF).